We begin with the raw amino-acid sequence, 255 residues long: Glutamate racemase (255 aa).

Substrate contacts are provided by residues 7–8 (DS) and 39–40 (YG). The Proton donor/acceptor role is filled by cysteine 70. A substrate-binding site is contributed by 71–72 (NT). Cysteine 181 (proton donor/acceptor) is an active-site residue. Substrate is bound at residue 182 to 183 (TH).

It belongs to the aspartate/glutamate racemases family.

It catalyses the reaction L-glutamate = D-glutamate. The protein operates within cell wall biogenesis; peptidoglycan biosynthesis. Functionally, provides the (R)-glutamate required for cell wall biosynthesis. This is Glutamate racemase from Helicobacter pylori (strain Shi470).